The sequence spans 506 residues: Deoxyribodipyrimidine photo-lyase (506 aa).

The span at Met-1–Ala-21 shows a compositional bias: pro residues. The tract at residues Met-1–Gly-33 is disordered. A Photolyase/cryptochrome alpha/beta domain is found at Gly-38 to Val-171. FAD is bound by residues Tyr-268 and Ser-282–Ser-285. Ser-312 is subject to Phosphoserine. FAD is bound by residues Glu-319–Ala-327, Lys-390, Asn-421, Asp-427, and Asp-427–Arg-429. The tract at residues Lys-487 to His-506 is disordered.

This sequence belongs to the DNA photolyase class-2 family. The cofactor is FAD. Expressed in proliferating tissues. Highly expressed in roots and shoot apical meristem (SAM). Expressed in leaves, flag leaves, and panicle.

It is found in the nucleus. It catalyses the reaction cyclobutadipyrimidine (in DNA) = 2 pyrimidine residues (in DNA).. Its function is as follows. Involved in repair of UV radiation-induced DNA damage. Catalyzes the light-dependent monomerization (300-600 nm) of cyclobutylpyrimidine dimers (CPDs), which are formed between adjacent bases on the same DNA strand upon exposure to ultraviolet radiation. Required for plant survival in the presence of UV-B light. Not involved in the repair of (6-4) photoproducts. The polypeptide is Deoxyribodipyrimidine photo-lyase (PHR) (Oryza sativa subsp. japonica (Rice)).